The chain runs to 121 residues: Small ribosomal subunit protein uS13 (121 aa).

Residues 94 to 121 form a disordered region; the sequence is GLPVRGQNTKNNARTRKGKAVAIAGKKK. The segment covering 106-121 has biased composition (basic residues); that stretch reads ARTRKGKAVAIAGKKK.

Belongs to the universal ribosomal protein uS13 family. In terms of assembly, part of the 30S ribosomal subunit. Forms a loose heterodimer with protein S19. Forms two bridges to the 50S subunit in the 70S ribosome.

Functionally, located at the top of the head of the 30S subunit, it contacts several helices of the 16S rRNA. In the 70S ribosome it contacts the 23S rRNA (bridge B1a) and protein L5 of the 50S subunit (bridge B1b), connecting the 2 subunits; these bridges are implicated in subunit movement. Contacts the tRNAs in the A and P-sites. The sequence is that of Small ribosomal subunit protein uS13 from Streptococcus sanguinis (strain SK36).